We begin with the raw amino-acid sequence, 225 residues long: MNLIEFPLLDQTSSNSVISTTPNDLSNWSRLSSLWPLLYGTSCCFIEFASLIGSRFDFDRYGLVPRSSPRQADLILTAGTVTMKMAPSLVRLYEQMPEPKYVIAMGACTITGGMFSTDSYSTVRGVDKLIPVDVYLPGCPPKPEAVIDALTKLRKKISREIVEDQTLSQNKNRFFTTSHKLYVRRSTHTGTYEQELLYQSPSTLDISSETFFKSKSPVPSYKLVN.

Residues cysteine 43, cysteine 44, cysteine 108, and cysteine 139 each contribute to the [4Fe-4S] cluster site.

The protein belongs to the complex I 20 kDa subunit family. NDH is composed of at least 16 different subunits, 5 of which are encoded in the nucleus. Requires [4Fe-4S] cluster as cofactor.

The protein localises to the plastid. The protein resides in the chloroplast thylakoid membrane. It carries out the reaction a plastoquinone + NADH + (n+1) H(+)(in) = a plastoquinol + NAD(+) + n H(+)(out). The enzyme catalyses a plastoquinone + NADPH + (n+1) H(+)(in) = a plastoquinol + NADP(+) + n H(+)(out). Functionally, NDH shuttles electrons from NAD(P)H:plastoquinone, via FMN and iron-sulfur (Fe-S) centers, to quinones in the photosynthetic chain and possibly in a chloroplast respiratory chain. The immediate electron acceptor for the enzyme in this species is believed to be plastoquinone. Couples the redox reaction to proton translocation, and thus conserves the redox energy in a proton gradient. The sequence is that of NAD(P)H-quinone oxidoreductase subunit K, chloroplastic from Lolium perenne (Perennial ryegrass).